The sequence spans 280 residues: Eukaryotic translation initiation factor 3 subunit F-1 (280 aa).

Positions 8 to 138 (VRVHPVVLFQ…LRSYVCIQLG (131 aa)) constitute an MPN domain.

This sequence belongs to the eIF-3 subunit F family. As to quaternary structure, component of the eukaryotic translation initiation factor 3 (eIF-3) complex. The eIF-3 complex interacts with pix.

The protein resides in the cytoplasm. Component of the eukaryotic translation initiation factor 3 (eIF-3) complex, which is involved in protein synthesis of a specialized repertoire of mRNAs and, together with other initiation factors, stimulates binding of mRNA and methionyl-tRNAi to the 40S ribosome. The eIF-3 complex specifically targets and initiates translation of a subset of mRNAs involved in cell proliferation. The polypeptide is Eukaryotic translation initiation factor 3 subunit F-1 (Drosophila persimilis (Fruit fly)).